A 190-amino-acid chain; its full sequence is MAVFEGTFTQTEPLRLAIVIGRFNDLVTTKLLAGCQDCLKRHGVDPDPHGNQVDYVWVPGSFEVPLVARQLALTHRYDAIICLGAVIRGQTPHFDYVSAEVSKGIAAASFQTGVPVIFGILTVDTMQQALERAGIKANHGWDYAMNALEMASLMRQLRSNVTDSYTQTQSLPAAFPNASIGKLTAESEEV.

5-amino-6-(D-ribitylamino)uracil is bound by residues phenylalanine 23, 61–63 (SFE), and 85–87 (AVI). 90-91 (QT) contacts (2S)-2-hydroxy-3-oxobutyl phosphate. Residue histidine 93 is the Proton donor of the active site. Residue phenylalanine 118 coordinates 5-amino-6-(D-ribitylamino)uracil. (2S)-2-hydroxy-3-oxobutyl phosphate is bound at residue arginine 132.

The protein belongs to the DMRL synthase family.

The catalysed reaction is (2S)-2-hydroxy-3-oxobutyl phosphate + 5-amino-6-(D-ribitylamino)uracil = 6,7-dimethyl-8-(1-D-ribityl)lumazine + phosphate + 2 H2O + H(+). Its pathway is cofactor biosynthesis; riboflavin biosynthesis; riboflavin from 2-hydroxy-3-oxobutyl phosphate and 5-amino-6-(D-ribitylamino)uracil: step 1/2. In terms of biological role, catalyzes the formation of 6,7-dimethyl-8-ribityllumazine by condensation of 5-amino-6-(D-ribitylamino)uracil with 3,4-dihydroxy-2-butanone 4-phosphate. This is the penultimate step in the biosynthesis of riboflavin. The polypeptide is 6,7-dimethyl-8-ribityllumazine synthase (Trichormus variabilis (strain ATCC 29413 / PCC 7937) (Anabaena variabilis)).